Here is a 209-residue protein sequence, read N- to C-terminus: Uracil phosphoribosyltransferase (209 aa).

5-phospho-alpha-D-ribose 1-diphosphate contacts are provided by residues arginine 79, arginine 104, and 131–139 (DPMLATGAS). Uracil is bound by residues isoleucine 194 and 199–201 (GDA). Aspartate 200 lines the 5-phospho-alpha-D-ribose 1-diphosphate pocket.

Belongs to the UPRTase family. It depends on Mg(2+) as a cofactor.

It carries out the reaction UMP + diphosphate = 5-phospho-alpha-D-ribose 1-diphosphate + uracil. Its pathway is pyrimidine metabolism; UMP biosynthesis via salvage pathway; UMP from uracil: step 1/1. Allosterically activated by GTP. Its function is as follows. Catalyzes the conversion of uracil and 5-phospho-alpha-D-ribose 1-diphosphate (PRPP) to UMP and diphosphate. The sequence is that of Uracil phosphoribosyltransferase from Staphylococcus haemolyticus (strain JCSC1435).